The following is a 446-amino-acid chain: Phosphoglucosamine mutase (446 aa).

S100 (phosphoserine intermediate) is an active-site residue. Mg(2+) contacts are provided by S100, D241, D243, and D245. The residue at position 100 (S100) is a Phosphoserine.

Belongs to the phosphohexose mutase family. It depends on Mg(2+) as a cofactor. Post-translationally, activated by phosphorylation.

The catalysed reaction is alpha-D-glucosamine 1-phosphate = D-glucosamine 6-phosphate. Its function is as follows. Catalyzes the conversion of glucosamine-6-phosphate to glucosamine-1-phosphate. This chain is Phosphoglucosamine mutase, found in Methylorubrum populi (strain ATCC BAA-705 / NCIMB 13946 / BJ001) (Methylobacterium populi).